The primary structure comprises 101 residues: Small ribosomal subunit protein uS14 (101 aa).

Belongs to the universal ribosomal protein uS14 family. Part of the 30S ribosomal subunit. Contacts proteins S3 and S10.

Its function is as follows. Binds 16S rRNA, required for the assembly of 30S particles and may also be responsible for determining the conformation of the 16S rRNA at the A site. The chain is Small ribosomal subunit protein uS14 from Paraburkholderia phymatum (strain DSM 17167 / CIP 108236 / LMG 21445 / STM815) (Burkholderia phymatum).